The following is a 1430-amino-acid chain: Gag-Pol polyprotein (1430 aa).

The N-myristoyl glycine; by host moiety is linked to residue G2. The tract at residues 7 to 31 (ILSGGKLDEWEKIQLRPGGKKRYKM) is interaction with Gp41. The segment at 8–43 (LSGGKLDEWEKIQLRPGGKKRYKMKHLIWASRELER) is interaction with host CALM1. Residues 12 to 19 (KLDEWEKI) form an interaction with host AP3D1 region. An interaction with membrane phosphatidylinositol 4,5-bisphosphate and RNA region spans residues 14–33 (DEWEKIQLRPGGKKRYKMKH). The Nuclear export signal motif lies at 16-22 (WEKIQLR). Residues 26-32 (KKRYKMK) carry the Nuclear localization signal motif. The interaction with membrane phosphatidylinositol 4,5-bisphosphate stretch occupies residues 73–77 (EELKS). Y128 bears the Phosphotyrosine; by host mark. An interaction with human PPIA/CYPA and NUP153 region spans residues 185 to 223 (NTVGGHQAAMQMLKDTINEEAAEWDRLHPVHAGPAPPGQ). The interval 273–359 (YSPVSILDIK…GGPSHKARVL (87 aa)) is dimerization/Multimerization of capsid protein p24. CCHC-type zinc fingers lie at residues 384–401 (VKCFNCGKEGHIARNCRA) and 405–422 (KGCWKCGREGHQMKDCTE). Residues 438-475 (EARKFPSEQTRANSPTSRELRVQRGDNPLSEAGAERRG) form a disordered region. The span at 444 to 454 (SEQTRANSPTS) shows a compositional bias: polar residues. Positions 483–487 (PQITL) are dimerization of protease. Residues 502–571 (KEALLDTGAD…TPVNIIGRNM (70 aa)) form the Peptidase A2 domain. The For protease activity; shared with dimeric partner role is filled by D507. 2 dimerization of protease regions span residues 531–537 (GIGGFIK) and 570–582 (NMLTQIGCTLNFP). The 191-residue stretch at 625 to 815 (EGKISKIGPE…PPFLWMGHEL (191 aa)) folds into the Reverse transcriptase domain. D691, D766, and D767 together coordinate Mg(2+). The RT 'primer grip' stretch occupies residues 808–816 (FLWMGHELH). Residues 980–996 (WDTWWTDYWQATWIPEW) carry the Tryptophan repeat motif motif. An RNase H type-1 domain is found at 1016-1139 (IAGADTFYVD…VDKLVSAGVR (124 aa)). 4 residues coordinate Mg(2+): D1025, E1060, D1080, and D1131. An Integrase-type zinc finger spans residues 1145-1186 (DGIDKAQEEHEKYHNNWRAMASDFNLPPIVAKEIVASCDKCQ). H1154, H1158, C1182, and C1185 together coordinate Zn(2+). One can recognise an Integrase catalytic domain in the interval 1196–1346 (VDCSPGIWQL…SAGERIIDII (151 aa)). The Mg(2+) site is built by D1206, D1258, and E1294. The integrase-type DNA-binding region spans 1365–1412 (FRVYYRDSRNPVWKGPAKLLWKGEGAVVIQDNSEIKIVPRRKAKIIRD).

Homotrimer; further assembles as hexamers of trimers. Interacts with gp41 (via C-terminus). Interacts with host CALM1; this interaction induces a conformational change in the Matrix protein, triggering exposure of the myristate group. Interacts with host AP3D1; this interaction allows the polyprotein trafficking to multivesicular bodies during virus assembly. Part of the pre-integration complex (PIC) which is composed of viral genome, matrix protein, Vpr and integrase. As to quaternary structure, homodimer; the homodimer further multimerizes as homohexamers or homopentamers. Interacts with human PPIA/CYPA; This interaction stabilizes the capsid. Interacts with human NUP153. Interacts with host PDZD8; this interaction stabilizes the capsid. Interacts with monkey TRIM5; this interaction destabilizes the capsid. In terms of assembly, homodimer, whose active site consists of two apposed aspartic acid residues. Heterodimer of p66 RT and p51 RT (RT p66/p51). Heterodimerization of RT is essential for DNA polymerase activity. The overall folding of the subdomains is similar in p66 RT and p51 RT but the spatial arrangements of the subdomains are dramatically different. As to quaternary structure, homotetramer; may further associate as a homohexadecamer. Part of the pre-integration complex (PIC) which is composed of viral genome, matrix protein, Vpr and integrase. Interacts with human SMARCB1/INI1 and human PSIP1/LEDGF isoform 1. Interacts with human KPNA3; this interaction might play a role in nuclear import of the pre-integration complex. Interacts with human NUP153; this interaction might play a role in nuclear import of the pre-integration complex. The cofactor is Mg(2+). Post-translationally, specific enzymatic cleavages by the viral protease yield mature proteins. The protease is released by autocatalytic cleavage. The polyprotein is cleaved during and after budding, this process is termed maturation. Proteolytic cleavage of p66 RT removes the RNase H domain to yield the p51 RT subunit. Nucleocapsid protein p7 might be further cleaved after virus entry. Tyrosine phosphorylated presumably in the virion by a host kinase. Phosphorylation is apparently not a major regulator of membrane association. In terms of processing, phosphorylated possibly by host MAPK1; this phosphorylation is necessary for Pin1-mediated virion uncoating. Post-translationally, methylated by host PRMT6, impairing its function by reducing RNA annealing and the initiation of reverse transcription.

It localises to the host cell membrane. The protein localises to the host endosome. The protein resides in the host multivesicular body. It is found in the virion membrane. Its subcellular location is the host nucleus. It localises to the host cytoplasm. The protein localises to the virion. The enzyme catalyses Specific for a P1 residue that is hydrophobic, and P1' variable, but often Pro.. It carries out the reaction Endohydrolysis of RNA in RNA/DNA hybrids. Three different cleavage modes: 1. sequence-specific internal cleavage of RNA. Human immunodeficiency virus type 1 and Moloney murine leukemia virus enzymes prefer to cleave the RNA strand one nucleotide away from the RNA-DNA junction. 2. RNA 5'-end directed cleavage 13-19 nucleotides from the RNA end. 3. DNA 3'-end directed cleavage 15-20 nucleotides away from the primer terminus.. The catalysed reaction is 3'-end directed exonucleolytic cleavage of viral RNA-DNA hybrid.. It catalyses the reaction DNA(n) + a 2'-deoxyribonucleoside 5'-triphosphate = DNA(n+1) + diphosphate. Protease: The viral protease is inhibited by many synthetic protease inhibitors (PIs), such as amprenavir, atazanavir, indinavir, loprinavir, nelfinavir, ritonavir and saquinavir. Use of protease inhibitors in tritherapy regimens permit more ambitious therapeutic strategies. Reverse transcriptase/ribonuclease H: RT can be inhibited either by nucleoside RT inhibitors (NRTIs) or by non nucleoside RT inhibitors (NNRTIs). NRTIs act as chain terminators, whereas NNRTIs inhibit DNA polymerization by binding a small hydrophobic pocket near the RT active site and inducing an allosteric change in this region. Classical NRTIs are abacavir, adefovir (PMEA), didanosine (ddI), lamivudine (3TC), stavudine (d4T), tenofovir (PMPA), zalcitabine (ddC), and zidovudine (AZT). Classical NNRTIs are atevirdine (BHAP U-87201E), delavirdine, efavirenz (DMP-266), emivirine (I-EBU), and nevirapine (BI-RG-587). The tritherapies used as a basic effective treatment of AIDS associate two NRTIs and one NNRTI. In terms of biological role, mediates, with Gag polyprotein, the essential events in virion assembly, including binding the plasma membrane, making the protein-protein interactions necessary to create spherical particles, recruiting the viral Env proteins, and packaging the genomic RNA via direct interactions with the RNA packaging sequence (Psi). Gag-Pol polyprotein may regulate its own translation, by the binding genomic RNA in the 5'-UTR. At low concentration, the polyprotein would promote translation, whereas at high concentration, the polyprotein would encapsidate genomic RNA and then shut off translation. Functionally, targets the polyprotein to the plasma membrane via a multipartite membrane-binding signal, that includes its myristoylated N-terminus. Matrix protein is part of the pre-integration complex. Implicated in the release from host cell mediated by Vpu. Binds to RNA. Forms the conical core that encapsulates the genomic RNA-nucleocapsid complex in the virion. Most core are conical, with only 7% tubular. The core is constituted by capsid protein hexamer subunits. The core is disassembled soon after virion entry. Host restriction factors such as TRIM5-alpha or TRIMCyp bind retroviral capsids and cause premature capsid disassembly, leading to blocks in reverse transcription. Capsid restriction by TRIM5 is one of the factors which restricts HIV-1 to the human species. Host PIN1 apparently facilitates the virion uncoating. On the other hand, interactions with PDZD8 or CYPA stabilize the capsid. Its function is as follows. Encapsulates and protects viral dimeric unspliced genomic RNA (gRNA). Binds these RNAs through its zinc fingers. Acts as a nucleic acid chaperone which is involved in rearangement of nucleic acid secondary structure during gRNA retrotranscription. Also facilitates template switch leading to recombination. As part of the polyprotein, participates in gRNA dimerization, packaging, tRNA incorporation and virion assembly. In terms of biological role, aspartyl protease that mediates proteolytic cleavages of Gag and Gag-Pol polyproteins during or shortly after the release of the virion from the plasma membrane. Cleavages take place as an ordered, step-wise cascade to yield mature proteins. This process is called maturation. Displays maximal activity during the budding process just prior to particle release from the cell. Also cleaves Nef and Vif, probably concomitantly with viral structural proteins on maturation of virus particles. Hydrolyzes host EIF4GI and PABP1 in order to shut off the capped cellular mRNA translation. The resulting inhibition of cellular protein synthesis serves to ensure maximal viral gene expression and to evade host immune response. Also mediates cleavage of host YTHDF3. Mediates cleavage of host CARD8, thereby activating the CARD8 inflammasome, leading to the clearance of latent HIV-1 in patient CD4(+) T-cells after viral reactivation; in contrast, HIV-1 can evade CARD8-sensing when its protease remains inactive in infected cells prior to viral budding. Functionally, multifunctional enzyme that converts the viral RNA genome into dsDNA in the cytoplasm, shortly after virus entry into the cell. This enzyme displays a DNA polymerase activity that can copy either DNA or RNA templates, and a ribonuclease H (RNase H) activity that cleaves the RNA strand of RNA-DNA heteroduplexes in a partially processive 3' to 5' endonucleasic mode. Conversion of viral genomic RNA into dsDNA requires many steps. A tRNA(3)-Lys binds to the primer-binding site (PBS) situated at the 5'-end of the viral RNA. RT uses the 3' end of the tRNA primer to perform a short round of RNA-dependent minus-strand DNA synthesis. The reading proceeds through the U5 region and ends after the repeated (R) region which is present at both ends of viral RNA. The portion of the RNA-DNA heteroduplex is digested by the RNase H, resulting in a ssDNA product attached to the tRNA primer. This ssDNA/tRNA hybridizes with the identical R region situated at the 3' end of viral RNA. This template exchange, known as minus-strand DNA strong stop transfer, can be either intra- or intermolecular. RT uses the 3' end of this newly synthesized short ssDNA to perform the RNA-dependent minus-strand DNA synthesis of the whole template. RNase H digests the RNA template except for two polypurine tracts (PPTs) situated at the 5'-end and near the center of the genome. It is not clear if both polymerase and RNase H activities are simultaneous. RNase H probably can proceed both in a polymerase-dependent (RNA cut into small fragments by the same RT performing DNA synthesis) and a polymerase-independent mode (cleavage of remaining RNA fragments by free RTs). Secondly, RT performs DNA-directed plus-strand DNA synthesis using the PPTs that have not been removed by RNase H as primers. PPTs and tRNA primers are then removed by RNase H. The 3' and 5' ssDNA PBS regions hybridize to form a circular dsDNA intermediate. Strand displacement synthesis by RT to the PBS and PPT ends produces a blunt ended, linear dsDNA copy of the viral genome that includes long terminal repeats (LTRs) at both ends. Catalyzes viral DNA integration into the host chromosome, by performing a series of DNA cutting and joining reactions. This enzyme activity takes place after virion entry into a cell and reverse transcription of the RNA genome in dsDNA. The first step in the integration process is 3' processing. This step requires a complex comprising the viral genome, matrix protein, Vpr and integrase. This complex is called the pre-integration complex (PIC). The integrase protein removes 2 nucleotides from each 3' end of the viral DNA, leaving recessed CA OH's at the 3' ends. In the second step, the PIC enters cell nucleus. This process is mediated through integrase and Vpr proteins, and allows the virus to infect a non dividing cell. This ability to enter the nucleus is specific of lentiviruses, other retroviruses cannot and rely on cell division to access cell chromosomes. In the third step, termed strand transfer, the integrase protein joins the previously processed 3' ends to the 5' ends of strands of target cellular DNA at the site of integration. The 5'-ends are produced by integrase-catalyzed staggered cuts, 5 bp apart. A Y-shaped, gapped, recombination intermediate results, with the 5'-ends of the viral DNA strands and the 3' ends of target DNA strands remaining unjoined, flanking a gap of 5 bp. The last step is viral DNA integration into host chromosome. This involves host DNA repair synthesis in which the 5 bp gaps between the unjoined strands are filled in and then ligated. Since this process occurs at both cuts flanking the HIV genome, a 5 bp duplication of host DNA is produced at the ends of HIV-1 integration. Alternatively, Integrase may catalyze the excision of viral DNA just after strand transfer, this is termed disintegration. The polypeptide is Gag-Pol polyprotein (gag-pol) (Homo sapiens (Human)).